A 180-amino-acid polypeptide reads, in one-letter code: DNA-directed RNA polymerase subunit Rpo7 (180 aa).

The S1 motif domain occupies 82 to 165 (QEVVEGEVLQ…RLPRIALTMR (84 aa)).

The protein belongs to the eukaryotic RPB7/RPC8 RNA polymerase subunit family. As to quaternary structure, part of the 13-subunit RNA polymerase complex. Forms a stalk with Rpo4 that extends from the main structure.

It localises to the cytoplasm. The enzyme catalyses RNA(n) + a ribonucleoside 5'-triphosphate = RNA(n+1) + diphosphate. Functionally, DNA-dependent RNA polymerase (RNAP) catalyzes the transcription of DNA into RNA using the four ribonucleoside triphosphates as substrates. This chain is DNA-directed RNA polymerase subunit Rpo7, found in Saccharolobus solfataricus (strain ATCC 35092 / DSM 1617 / JCM 11322 / P2) (Sulfolobus solfataricus).